A 107-amino-acid chain; its full sequence is Putative double-stranded DNA mimic protein HSM_1473 (107 aa).

Belongs to the putative dsDNA mimic protein family.

Functionally, may act as a double-stranded DNA (dsDNA) mimic. Probably regulates the activity of a dsDNA-binding protein. This is Putative double-stranded DNA mimic protein HSM_1473 from Histophilus somni (strain 2336) (Haemophilus somnus).